A 111-amino-acid polypeptide reads, in one-letter code: Nucleoid-associated protein LBA0378 (111 aa).

This sequence belongs to the YbaB/EbfC family. As to quaternary structure, homodimer.

Its subcellular location is the cytoplasm. It localises to the nucleoid. In terms of biological role, binds to DNA and alters its conformation. May be involved in regulation of gene expression, nucleoid organization and DNA protection. This Lactobacillus acidophilus (strain ATCC 700396 / NCK56 / N2 / NCFM) protein is Nucleoid-associated protein LBA0378.